Reading from the N-terminus, the 1615-residue chain is Ferredoxin-dependent glutamate synthase, chloroplastic (1615 aa).

A chloroplast-targeting transit peptide spans 1-52 (MATLPRAAAAAAPSPAAALLPLPRAAPLLAGRAAARSAARRLRARGTRAPPL). Catalysis depends on Cys-97, which acts as the Nucleophile. Residues 97–496 (CGVGFVANLK…PGMMITVDLQ (400 aa)) form the Glutamine amidotransferase type-2 domain. 1175-1232 (LSETHQTLIQNGLRERVVLRVDGGFRSGLDVLMAAAMGADEYGFGSVAMIATGCVMAR) provides a ligand contact to FMN. Residues Cys-1228, Cys-1234, and Cys-1239 each coordinate [3Fe-4S] cluster.

This sequence belongs to the glutamate synthase family. [3Fe-4S] cluster serves as cofactor. Requires FAD as cofactor. FMN is required as a cofactor. Expressed in leaf blades and at lower levels in roots.

It localises to the plastid. The protein resides in the chloroplast. It carries out the reaction 2 oxidized [2Fe-2S]-[ferredoxin] + 2 L-glutamate = L-glutamine + 2 reduced [2Fe-2S]-[ferredoxin] + 2-oxoglutarate + 2 H(+). The protein operates within amino-acid biosynthesis; L-glutamate biosynthesis via GLT pathway; L-glutamate from 2-oxoglutarate and L-glutamine (ferredoxin route): step 1/1. Its pathway is energy metabolism; nitrogen metabolism. Functionally, involved in glutamate biosynthesis in leaf. Required for the reassimilation of ammonium ions generated during photorespiration. This Oryza sativa subsp. japonica (Rice) protein is Ferredoxin-dependent glutamate synthase, chloroplastic (GLU).